The primary structure comprises 263 residues: Transcription factor 19-like protein (263 aa).

Residues 31–88 (YGLGCRADLCDVALRPQQEPGLISGVHAELHAELQGDDWRVSLEDHSSQGTLVNNVRL) form the FHA domain. The residue at position 78 (S78) is a Phosphoserine. 2 disordered regions span residues 140–164 (SKGE…PLST) and 189–225 (LTFS…RKSA).

The protein localises to the nucleus. In terms of biological role, potential transcription factor that may play a role in the regulation of genes involved in cell cycle G1/S transition. May bind to regulatory elements of genes, including the promoter of the transcription factor FOXO1. The sequence is that of Transcription factor 19-like protein (Tcf19) from Mus musculus (Mouse).